Here is a 550-residue protein sequence, read N- to C-terminus: Epidermal growth factor-like protein 6 (550 aa).

Positions 1-18 are cleaved as a signal peptide; sequence MQPPWGLALPLLLPWVTG. An EGF-like 1 domain is found at 55–90; the sequence is NKGVCEAMCEPRCKFGECVGPNKCRCFPGYTGKTCT. Intrachain disulfides connect cysteine 59/cysteine 72, cysteine 63/cysteine 78, cysteine 80/cysteine 89, cysteine 96/cysteine 107, cysteine 103/cysteine 116, and cysteine 118/cysteine 130. One can recognise an EGF-like 2; calcium-binding domain in the interval 92–131; sequence DVNECGVKPRPCQHRCVNTHGSYKCFCLSGHMLLPDATCS. An EGF-like 3 domain is found at 135–171; the sequence is TCARLNCQYGCEDTEEGPRCVCPSSGLRLGPNGRVCL. Residues 172 to 210 form the EGF-like 4; calcium-binding domain; that stretch reads DIDECASSKAVCPSNRRCVNTFGSYYCKCHIGFELKYIG. Disulfide bonds link cysteine 176–cysteine 189, cysteine 183–cysteine 198, cysteine 221–cysteine 234, cysteine 228–cysteine 243, and cysteine 245–cysteine 256. The EGF-like 5; calcium-binding domain occupies 217-257; that stretch reads DINECALNTHPCSPHANCLNTRGSFKCKCKQGYRGNGLQCS. Positions 295–354 are disordered; that stretch reads KMVTPRPASTRVPKVNLPYSSEEGVSRGRNYDGEQKKKEEGKRERLEEEKGEKTLRNEVE. Over residues 318 to 354 the composition is skewed to basic and acidic residues; it reads GVSRGRNYDGEQKKKEEGKRERLEEEKGEKTLRNEVE. Residues 327 to 357 are a coiled coil; it reads GEQKKKEEGKRERLEEEKGEKTLRNEVEQER. A glycan (N-linked (GlcNAc...) asparagine) is linked at asparagine 394. The MAM domain occupies 397–543; the sequence is VDCSFDLGVC…VLLVSGLCPD (147 aa).

This sequence belongs to the nephronectin family. In terms of tissue distribution, expressed at basement membrane of pelage follicles (at protein level).

The protein resides in the secreted. Its subcellular location is the extracellular space. The protein localises to the extracellular matrix. It is found in the basement membrane. Functionally, may bind integrin alpha-8/beta-1 and play a role in hair follicle morphogenesis. Promotes matrix assembly. The chain is Epidermal growth factor-like protein 6 (Egfl6) from Mus musculus (Mouse).